The chain runs to 585 residues: Proline--tRNA ligase (585 aa).

Belongs to the class-II aminoacyl-tRNA synthetase family. ProS type 1 subfamily. In terms of assembly, homodimer.

It is found in the cytoplasm. The catalysed reaction is tRNA(Pro) + L-proline + ATP = L-prolyl-tRNA(Pro) + AMP + diphosphate. Its function is as follows. Catalyzes the attachment of proline to tRNA(Pro) in a two-step reaction: proline is first activated by ATP to form Pro-AMP and then transferred to the acceptor end of tRNA(Pro). As ProRS can inadvertently accommodate and process non-cognate amino acids such as alanine and cysteine, to avoid such errors it has two additional distinct editing activities against alanine. One activity is designated as 'pretransfer' editing and involves the tRNA(Pro)-independent hydrolysis of activated Ala-AMP. The other activity is designated 'posttransfer' editing and involves deacylation of mischarged Ala-tRNA(Pro). The misacylated Cys-tRNA(Pro) is not edited by ProRS. This is Proline--tRNA ligase from Mycolicibacterium vanbaalenii (strain DSM 7251 / JCM 13017 / BCRC 16820 / KCTC 9966 / NRRL B-24157 / PYR-1) (Mycobacterium vanbaalenii).